Here is a 222-residue protein sequence, read N- to C-terminus: Superoxide dismutase [Mn], mitochondrial (222 aa).

A mitochondrion-targeting transit peptide spans 1-24 (MLCRAACSTGRRLGPVAGAAGSRH). Histidine 50 is a Mn(2+) binding site. Tyrosine 58 is modified (3'-nitrotyrosine). N6-acetyllysine; alternate is present on residues lysine 68 and lysine 75. N6-succinyllysine; alternate occurs at positions 68 and 75. Histidine 98 lines the Mn(2+) pocket. Lysine 114 is subject to N6-acetyllysine. 2 positions are modified to N6-acetyllysine; alternate: lysine 122 and lysine 130. N6-succinyllysine; alternate occurs at positions 122 and 130. Mn(2+) is bound by residues aspartate 183 and histidine 187. N6-acetyllysine is present on lysine 202.

Belongs to the iron/manganese superoxide dismutase family. As to quaternary structure, homotetramer. The cofactor is Mn(2+). Post-translationally, nitrated under oxidative stress. Nitration coupled with oxidation inhibits the catalytic activity. Acetylation at Lys-122 decreases enzymatic activity. Deacetylated by SIRT3 upon exposure to ionizing radiations or after long fasting. In terms of processing, polyubiquitinated; leading to proteasomal degradation. Deubiquitinated by USP36 which increases protein stability.

It localises to the mitochondrion matrix. It carries out the reaction 2 superoxide + 2 H(+) = H2O2 + O2. In terms of biological role, destroys superoxide anion radicals which are normally produced within the cells and which are toxic to biological systems. The protein is Superoxide dismutase [Mn], mitochondrial (Sod2) of Mus musculus (Mouse).